The sequence spans 552 residues: Non-structural protein NS1 (552 aa).

Belongs to the orbivirus non-structural protein NS1 family.

The sequence is that of Non-structural protein NS1 (Segment-5) from Antilocapra americana (Pronghorn).